A 251-amino-acid chain; its full sequence is uncharacterized protein (251 aa).

Positions 1-18 (MRILIILSIILCSFFARA) are cleaved as a signal peptide.

The protein belongs to the MlaA family.

This is an uncharacterized protein from Rickettsia typhi (strain ATCC VR-144 / Wilmington).